The chain runs to 187 residues: 2-oxoglutarate synthase subunit KorC (187 aa).

As to quaternary structure, heterotetramer of the KorA, KorB, KorC and KorD subunits.

It carries out the reaction 2 oxidized [2Fe-2S]-[ferredoxin] + 2-oxoglutarate + CoA = succinyl-CoA + 2 reduced [2Fe-2S]-[ferredoxin] + CO2 + H(+). This is 2-oxoglutarate synthase subunit KorC (korC) from Archaeoglobus fulgidus (strain ATCC 49558 / DSM 4304 / JCM 9628 / NBRC 100126 / VC-16).